The primary structure comprises 90 residues: UPF0298 protein RBAM_014860 (90 aa).

This sequence belongs to the UPF0298 family.

It is found in the cytoplasm. This chain is UPF0298 protein RBAM_014860, found in Bacillus velezensis (strain DSM 23117 / BGSC 10A6 / LMG 26770 / FZB42) (Bacillus amyloliquefaciens subsp. plantarum).